The sequence spans 510 residues: GMP synthase [glutamine-hydrolyzing] (510 aa).

Residues 5–195 enclose the Glutamine amidotransferase type-1 domain; the sequence is LVIVVDFGGQ…LFDICNLKGD (191 aa). Catalysis depends on Cys82, which acts as the Nucleophile. Active-site residues include His169 and Glu171. The region spanning 196-385 is the GMPS ATP-PPase domain; the sequence is WSMSSFVDEK…LGIPHKLVWR (190 aa). Residue 223 to 229 coordinates ATP; the sequence is SGGVDSS.

As to quaternary structure, homodimer.

It carries out the reaction XMP + L-glutamine + ATP + H2O = GMP + L-glutamate + AMP + diphosphate + 2 H(+). Its pathway is purine metabolism; GMP biosynthesis; GMP from XMP (L-Gln route): step 1/1. In terms of biological role, catalyzes the synthesis of GMP from XMP. The protein is GMP synthase [glutamine-hydrolyzing] of Clostridium kluyveri (strain NBRC 12016).